The following is a 214-amino-acid chain: Probable nicotinate-nucleotide adenylyltransferase (214 aa).

Belongs to the NadD family.

The catalysed reaction is nicotinate beta-D-ribonucleotide + ATP + H(+) = deamido-NAD(+) + diphosphate. The protein operates within cofactor biosynthesis; NAD(+) biosynthesis; deamido-NAD(+) from nicotinate D-ribonucleotide: step 1/1. Functionally, catalyzes the reversible adenylation of nicotinate mononucleotide (NaMN) to nicotinic acid adenine dinucleotide (NaAD). In Mycobacterium tuberculosis (strain ATCC 25177 / H37Ra), this protein is Probable nicotinate-nucleotide adenylyltransferase.